A 279-amino-acid polypeptide reads, in one-letter code: Tumor protein p63-regulated gene 1 protein (279 aa).

The segment at 1-49 is disordered; the sequence is MSTIGSFDGFQPVSLKQEEEDQPSENDHLSTKEGNSGKDPGSRRISRQQ. One can recognise a hSac2 domain in the interval 72–259; the sequence is VTRPGAIETA…ILIETYTGLM (188 aa).

The protein belongs to the TPRG1 family. As to expression, highly expressed in skin. Also detected at low levels in tongue and esophagus.

The protein localises to the cytoplasm. The protein is Tumor protein p63-regulated gene 1 protein of Mus musculus (Mouse).